Consider the following 332-residue polypeptide: Ribosomal RNA small subunit methyltransferase C (332 aa).

This sequence belongs to the methyltransferase superfamily. RsmC family. Monomer.

Its subcellular location is the cytoplasm. It catalyses the reaction guanosine(1207) in 16S rRNA + S-adenosyl-L-methionine = N(2)-methylguanosine(1207) in 16S rRNA + S-adenosyl-L-homocysteine + H(+). Functionally, specifically methylates the guanine in position 1207 of 16S rRNA in the 30S particle. The protein is Ribosomal RNA small subunit methyltransferase C of Pseudomonas fluorescens (strain ATCC BAA-477 / NRRL B-23932 / Pf-5).